Here is a 102-residue protein sequence, read N- to C-terminus: Sulfur globule protein CV3 (102 aa).

Positions 1–25 are cleaved as a signal peptide; it reads MTMKRLLLVSTLAGASALATLPANA.

The protein envelope of the sulfur globules is composed of the three different proteins CV1, CV2 and CV3.

Structural protein of the sulfur globules, which are intracellular globules that serve for sulfur storage in purple sulfur bacteria. The sequence is that of Sulfur globule protein CV3 (sgpC) from Allochromatium vinosum (strain ATCC 17899 / DSM 180 / NBRC 103801 / NCIMB 10441 / D) (Chromatium vinosum).